The chain runs to 623 residues: MAKIIGIDLGTTNSCVSVMEGGEPVVIPNAEGSRTTPSVVSFQANGERLIGQVAKRQAITNPEKTIISIKRYMGTDHKVNIDNTEYTPQQISAMVLQKLKADAEAYLGEKVTQAVITVPAYFNDSQRQATKDAGKIAGLEVLRIINEPTAASLAYGLDKMDTNEKILVYDLGGGTFDVSILELGDGVFEVKATNGDTKLGGDDFDQKLIDYIAETFKAENGIDLRNDKMAIQRLKEAAEKAKIELSSATQTNINLPFITADATGPKHIDMNLTRAKFNELTHDLVQRTLEPIKKSLEGSGYAMSDIDKIIMVGGSTRIPAVQDAVKDFTGKELSKGVNPDEVVAMGAAIQAGVLTGEVKDVLLLDVTPLTLGIETFGGVSTTLIEKNTTIPTRKSQVFSTAADGQTSVEIHVVQGERSMAADNKTLGRFTLSGIAPAPRGIPQIEVTFDIDANGIVNVSAKDKGTGKEANITITASTNLTDDEIEKAVNEAKKFEAEDKKRKESIEVKNNADQIVYQTEKTLTDLGDKVSAEDKAQIEEKVKVVKDVKDGEDLEAIKKATEDLTQTFYGISSKIYQQANPEGAPGAGFDPNNMGGANAGNASAGNDKKDDNVVDADFKVEDDK.

At Thr175 the chain carries Phosphothreonine; by autocatalysis. Residues 578–623 (ANPEGAPGAGFDPNNMGGANAGNASAGNDKKDDNVVDADFKVEDDK) are disordered. The span at 591–604 (NNMGGANAGNASAG) shows a compositional bias: low complexity. Basic and acidic residues predominate over residues 605 to 623 (NDKKDDNVVDADFKVEDDK).

It belongs to the heat shock protein 70 family.

Acts as a chaperone. The chain is Chaperone protein DnaK from Clostridium botulinum (strain 657 / Type Ba4).